A 341-amino-acid polypeptide reads, in one-letter code: MVANSGGGLTDADGGPVRHIPVLLKEVLEALAPAPGKLILDGTFGAGGYTSAILAAGADMIALDRDPTAIAAGQSMVAAHAGRLTLIQSQFSQLADHAPQGGLDGVVLDIGVSSMQLDEAERGFSFSKNGPLDMRMSASGVSAADVVNHAKLADLIRIFVFLGEEKQAPRIAHAIEKRRAEAPFVTTRDLAGLIEIVTPRKAKDKIHPATRVFQALRIFVNDELGELAQALFAAERALKPGGRLVVVTFHSLEDRIVKKFFADRSGRAGGSRHMPMVHERLATFDPIGKPMISASDAEAEINPRARSAKLRAGLRTSVQAEAADLSIFDLPNLASLGKLGG.

Residues 47 to 49 (GGY), Asp-64, Phe-91, Asp-109, and Gln-116 contribute to the S-adenosyl-L-methionine site.

This sequence belongs to the methyltransferase superfamily. RsmH family.

It localises to the cytoplasm. The enzyme catalyses cytidine(1402) in 16S rRNA + S-adenosyl-L-methionine = N(4)-methylcytidine(1402) in 16S rRNA + S-adenosyl-L-homocysteine + H(+). Specifically methylates the N4 position of cytidine in position 1402 (C1402) of 16S rRNA. The chain is Ribosomal RNA small subunit methyltransferase H from Rhizobium rhizogenes (strain K84 / ATCC BAA-868) (Agrobacterium radiobacter).